Here is a 198-residue protein sequence, read N- to C-terminus: Protein GrpE (198 aa).

The span at 1 to 14 (MSNEENKINEEALK) shows a compositional bias: basic and acidic residues. Residues 1–20 (MSNEENKINEEALKQQDAAE) are disordered.

This sequence belongs to the GrpE family. Homodimer.

It localises to the cytoplasm. In terms of biological role, participates actively in the response to hyperosmotic and heat shock by preventing the aggregation of stress-denatured proteins, in association with DnaK and GrpE. It is the nucleotide exchange factor for DnaK and may function as a thermosensor. Unfolded proteins bind initially to DnaJ; upon interaction with the DnaJ-bound protein, DnaK hydrolyzes its bound ATP, resulting in the formation of a stable complex. GrpE releases ADP from DnaK; ATP binding to DnaK triggers the release of the substrate protein, thus completing the reaction cycle. Several rounds of ATP-dependent interactions between DnaJ, DnaK and GrpE are required for fully efficient folding. This chain is Protein GrpE, found in Vibrio vulnificus (strain YJ016).